Consider the following 367-residue polypeptide: Peptide chain release factor 2 (367 aa).

Q254 is modified (N5-methylglutamine).

Belongs to the prokaryotic/mitochondrial release factor family. Methylated by PrmC. Methylation increases the termination efficiency of RF2.

The protein localises to the cytoplasm. Its function is as follows. Peptide chain release factor 2 directs the termination of translation in response to the peptide chain termination codons UGA and UAA. The protein is Peptide chain release factor 2 of Neisseria gonorrhoeae (strain ATCC 700825 / FA 1090).